The primary structure comprises 409 residues: Immunity-related GTPase family M protein 1 (409 aa).

One can recognise an IRG-type G domain in the interval 75–251; sequence IPVSIFVTGD…PKLRDTLHKD (177 aa). GTP-binding positions include 84–91, 109–113, and 191–193; these read DSGNGMSS, TGVVR, and KLD. Serine 202 bears the Phosphoserine mark. Position 232–234 (232–234) interacts with GTP; it reads SSL. Lysine 270 is covalently cross-linked (Glycyl lysine isopeptide (Lys-Gly) (interchain with G-Cter in ubiquitin)). The interval 350 to 374 is alpha-K amphipathic helix; it reads KLRLMTCAIVNAFFRLLRFLPCVCC.

This sequence belongs to the TRAFAC class dynamin-like GTPase superfamily. IRG family. In terms of assembly, interacts with ULK1; promoting the coassembly of ULK1 and BECN1. Interacts with BECN1; enhancing BECN1-interacting partners and influencing the composition of the BECN1 complex. Interacts with ATG16L1. Interacts with NOD2; promoting Irgm1 'Lys-63'-linked polyubiquitination, which is required for interactions with the core autophagy factors. Interacts with STX17; promoting STX17 recruitment to autophagosomes. Interacts with ATG8 proteins (GABARAP, GABARAPL1, GABARAPL2, MAP1LC3A, MAP1LC3B and MAP1LC3C); promoting STX17 recruitment to autophagosomes. Interacts with TFEB; promoting association between TFEB and PPP3CB and TFEB dephosphorylation. Interacts with PPP3CB; promoting association between TFEB and PPP3CB and TFEB dephosphorylation. Interacts with NLRP3; preventing NLRP3 inflammasome assembly and promoting SQSTM1/p62-dependent autophagic degradation of NLRP3. Interacts with CGAS; promoting SQSTM1/p62-dependent autophagic degradation of CGAS. Interacts with RIGI/RIG-I; promoting SQSTM1/p62-dependent autophagic degradation of RIGI/RIG-I. Interacts with NOD1; promoting SQSTM1/p62-dependent autophagic degradation of RIGI/RIG-I. Interacts with NOD2; promoting SQSTM1/p62-dependent autophagic degradation of RIGI/RIG-I. Interacts with RIPK2; promoting SQSTM1/p62-dependent autophagic degradation of RIGI/RIG-I. Interacts with PIK3CA. Palmitoylated on C-terminal Cys residues. Palmitoylation, together with the alpha-K amphipathic helix, which binds phosphatidylinositol, mediate binding to membranes. In terms of processing, ubiquitinated via 'Lys-63'-linked polyubiquitination in a NOD2-dependent process. 'Lys-63'-linked polyubiquitination is required for interactions with the core autophagy factors. Ubiquitination at Lys-270 by the DCX(WDR77) complex, also named CLR4(WDR77) complex, in intestinal cells, leading to its degradation by the proteasome. As to expression, expressed in lung and primary macrophages.

It is found in the golgi apparatus membrane. The protein resides in the cell membrane. Its subcellular location is the cytoplasmic vesicle. The protein localises to the phagosome membrane. It localises to the autophagosome membrane. It is found in the lysosome membrane. The protein resides in the late endosome membrane. Its subcellular location is the mitochondrion membrane. The protein localises to the lipid droplet. It localises to the cell projection. It is found in the phagocytic cup. It catalyses the reaction GTP + H2O = GDP + phosphate + H(+). Its function is as follows. Immunity-related GTPase that plays important roles in innate immunity and inflammatory response. Acts as a dynamin-like protein that binds to intracellular membranes and promotes remodeling and trafficking of those membranes. Required for clearance of acute protozoan and bacterial infections by interacting with autophagy and lysosome regulatory proteins, thereby promoting the fusion of phagosomes with lysosomes for efficient degradation of cargo including microbes. Regulates selective autophagy, including xenophagy and mitophagy, both directly and indirectly. Directly regulates autophagy by acting as a molecular adapter that promotes the coassembly of the core autophagy machinery to mediate antimicrobial defense: Irgm1 (1) activates AMPK, which in turn phosphorylates ULK1 and BECN1 to induce autophagy, (2) promotes the coassembly of ULK1 and BECN1, enhancing BECN1-interacting partners and (3) influences the composition of the BECN1 complex, by competing with the negative regulators BCL2 and RUBCN, to trigger autophagy. Also activates autophagy by promoting recruitment of STX17 to autophagosomes. In collaboration with ATG8 proteins, regulate lysosomal biogenesis, a fundamental process for any autophagic pathway, by promoting TFEB dephosphorylation. Also modulates autophagy by assisting with autophagosome formation and preventing lysosomal deacidification. Regulates autophagy by affecting mitochondrial fusion and fission. Also involved in M1 macrophage activation for the production of proinflammatory cytokines. While activating autophagy, acts as a key negative regulator of the inflammatory and interferon responses both by (1) promoting mitophagy and (2) mediating autophagy-dependent degradation of effectors of the inflammatory response. Promotes degradation of damaged and IFNG/IFN-gamma-stressed mitochondria via mitophagy, preventing cytosolic release of ligands that activate inflammation. Negatively regulates interferon-signaling in hematopoietic stem cells, preserving hematopoietic stem cell number and function. Promotes expansion of activated CD4(+) T-cells by inhibiting IFNG/IFN-gamma signaling, thereby preventing Ifng-mediated cell death of CD4(+) T-cells. Acts as a suppressor of inflammation by promoting recruitment of inflammation effectors, such as CGAS, RIGI/RIG-I and NLRP3, to autophagosome membranes, leading to their SQSTM1/p62-dependent autophagic degradation. Also directly inhibits assembly of the NLRP3 inflammasome by preventing the association between NLRP3 and PYCARD. Acts as a negative regulator of antiviral innate immune response by suppressing the RIPK2-dependent pro-inflammatory response: mediates recruitment of RIPosomes, composed of RIPK2 and NOD1 or NOD2, to autophagosome membranes, promoting their SQSTM1/p62-dependent autophagic degradation. The polypeptide is Immunity-related GTPase family M protein 1 (Mus musculus (Mouse)).